Here is a 261-residue protein sequence, read N- to C-terminus: G patch domain-containing protein 11 (261 aa).

3 disordered regions span residues 1–67 (MEEE…LNEA), 88–124 (ALGK…AEEN), and 184–213 (EAWY…LVEE). Composition is skewed to basic and acidic residues over residues 29 to 64 (RVKE…DTKL) and 111 to 124 (IGHE…AEEN). Positions 31-65 (KECYEKEEKHKEANIKNRQQKLKDVEKEKRDTKLN) form a coiled coil. The region spanning 70–116 (NENKGFALLQKMGYKKGQALGKKGDGIVEPIPLNIKTGRSGIGHEEM) is the G-patch domain. Positions 190–222 (KMNEQEADEEADEETEEDEDLVEEELSTLEKLQ) form a coiled coil. The span at 194–213 (QEADEEADEETEEDEDLVEE) shows a compositional bias: acidic residues.

Belongs to the GPATCH11 family.

It is found in the chromosome. The protein localises to the centromere. Its subcellular location is the kinetochore. The chain is G patch domain-containing protein 11 (gpatch11) from Xenopus tropicalis (Western clawed frog).